The primary structure comprises 611 residues: O-fucosyltransferase 8 (611 aa).

The segment at 1-29 (MGKQGSPRSPRPETIDKEEKFGRRSLDSL) is disordered. A compositionally biased stretch (basic and acidic residues) spans 10-26 (PRPETIDKEEKFGRRSL). The helical; Signal-anchor for type II membrane protein transmembrane segment at 78-98 (IVLMISVTGFIFCMDSIMVSI) threads the bilayer. N-linked (GlcNAc...) asparagine glycans are attached at residues Asn-115, Asn-216, and Asn-270. 386 to 388 (HLR) provides a ligand contact to substrate. Asn-506 carries an N-linked (GlcNAc...) asparagine glycan.

This sequence belongs to the glycosyltransferase GT106 family.

The protein localises to the membrane. It participates in glycan metabolism. The chain is O-fucosyltransferase 8 from Arabidopsis thaliana (Mouse-ear cress).